The primary structure comprises 116 residues: Large ribosomal subunit protein bL17 (116 aa).

This sequence belongs to the bacterial ribosomal protein bL17 family. Part of the 50S ribosomal subunit. Contacts protein L32.

This chain is Large ribosomal subunit protein bL17, found in Deinococcus geothermalis (strain DSM 11300 / CIP 105573 / AG-3a).